The sequence spans 138 residues: Small ribosomal subunit protein uS9 (138 aa).

The tract at residues 99-138 (DPDNRPPLKTEGYLTRDPRAKERKKYGLHKARKAPQYSKR) is disordered. A compositionally biased stretch (basic and acidic residues) spans 100–118 (PDNRPPLKTEGYLTRDPRA). Residues 119–138 (KERKKYGLHKARKAPQYSKR) are compositionally biased toward basic residues.

This sequence belongs to the universal ribosomal protein uS9 family.

This Nostoc punctiforme (strain ATCC 29133 / PCC 73102) protein is Small ribosomal subunit protein uS9.